A 243-amino-acid chain; its full sequence is Probable transcriptional regulatory protein BB_0025 (243 aa).

The protein belongs to the TACO1 family.

The protein localises to the cytoplasm. The sequence is that of Probable transcriptional regulatory protein BB_0025 from Borreliella burgdorferi (strain ATCC 35210 / DSM 4680 / CIP 102532 / B31) (Borrelia burgdorferi).